Reading from the N-terminus, the 353-residue chain is Protein pelota homolog (353 aa).

The protein belongs to the eukaryotic release factor 1 family. Pelota subfamily. Monomer. It depends on a divalent metal cation as a cofactor.

It localises to the cytoplasm. In terms of biological role, may function in recognizing stalled ribosomes, interact with stem-loop structures in stalled mRNA molecules, and effect endonucleolytic cleavage of the mRNA. May play a role in the release non-functional ribosomes and degradation of damaged mRNAs. Has endoribonuclease activity. This is Protein pelota homolog from Methanobrevibacter smithii (strain ATCC 35061 / DSM 861 / OCM 144 / PS).